Consider the following 375-residue polypeptide: Serpentine receptor class alpha-39 (375 aa).

The next 7 membrane-spanning stretches (helical) occupy residues 17–37, 51–71, 99–119, 138–158, 183–203, 236–256, and 275–295; these read LFAI…LFII, LVFL…LTAW, IRGT…GILL, LGTI…FILL, VYVM…VHLV, TPLL…VSVF, and LFIM…ELWL.

Belongs to the nematode receptor-like protein sra family.

It is found in the membrane. This chain is Serpentine receptor class alpha-39 (sra-39), found in Caenorhabditis elegans.